The primary structure comprises 84 residues: PAMP-induced secreted peptide 2 (84 aa).

Residues 1–24 (MMMNKNVLSSILFFMLIGSVLVES) form the signal peptide. The segment at 50 to 84 (KDSGPSPGEGHKVVDRKDTFRFVKHSGPSPSGPGH) is disordered. Residues 58–70 (EGHKVVDRKDTFR) are compositionally biased toward basic and acidic residues. Residues Pro77 and Pro79 each carry the 4-hydroxyproline modification.

In terms of processing, contains 4-hydroxyproline; hydroxylated on Pro-77 and Pro-79.

The protein localises to the secreted. It localises to the extracellular space. The protein resides in the apoplast. Endogenous secreted peptide that acts as elicitor of immune response and positive regulator of defense response. Amplifies the immune response triggered by flg22, the active epitope of bacterial flagellin. Acts as a negative regulator of root growth. The polypeptide is PAMP-induced secreted peptide 2 (Arabidopsis thaliana (Mouse-ear cress)).